The chain runs to 864 residues: uncharacterized protein (864 aa).

This is an uncharacterized protein from Rickettsia typhi (strain ATCC VR-144 / Wilmington).